The following is a 239-amino-acid chain: Serine protease SplF (239 aa).

The signal sequence occupies residues 1–36 (MNKNIIIKSIAALTILTSITGVGTTVVDGIQQTAKA). Residues histidine 75, aspartate 114, and serine 192 each act as charge relay system in the active site.

The protein belongs to the peptidase S1B family.

Its subcellular location is the secreted. This chain is Serine protease SplF (splF), found in Staphylococcus aureus (strain JH9).